Here is a 269-residue protein sequence, read N- to C-terminus: tRNA pseudouridine synthase A (269 aa).

Asp52 (nucleophile) is an active-site residue. Tyr110 is a binding site for substrate.

The protein belongs to the tRNA pseudouridine synthase TruA family. As to quaternary structure, homodimer.

It catalyses the reaction uridine(38/39/40) in tRNA = pseudouridine(38/39/40) in tRNA. Its function is as follows. Formation of pseudouridine at positions 38, 39 and 40 in the anticodon stem and loop of transfer RNAs. The polypeptide is tRNA pseudouridine synthase A (Bacteroides thetaiotaomicron (strain ATCC 29148 / DSM 2079 / JCM 5827 / CCUG 10774 / NCTC 10582 / VPI-5482 / E50)).